Reading from the N-terminus, the 589-residue chain is Peptide transporter PTR_A (589 aa).

Positions 1-56 (MSETKPAANDLSNVPSASDSDKDNSLDKVHSLEKTGVHEDINKLPSSDLEQLEDDG) are disordered. The segment covering 19–42 (DSDKDNSLDKVHSLEKTGVHEDIN) has biased composition (basic and acidic residues). The next 4 membrane-spanning stretches (helical) occupy residues 74-95 (IPLS…YYGL), 124-144 (ALSY…AWIA), 153-173 (AICI…ITSI), and 180-200 (NTSL…TGGV). N-linked (GlcNAc...) asparagine glycosylation is present at Asn-233. 8 helical membrane passes run 236–256 (IQNV…SVIA), 266–286 (FWAG…VLLL), 345–365 (VYAC…GQMI), 388–408 (INAI…YPFI), 420–440 (IFWG…LQHF), 467–487 (IAIQ…ASIT), 502–522 (SFIM…GIAL), and 533–553 (WTYT…YIIF).

Belongs to the major facilitator superfamily. Proton-dependent oligopeptide transporter (POT/PTR) (TC 2.A.17) family.

It localises to the cell membrane. The catalysed reaction is a dipeptide(out) + H(+)(out) = a dipeptide(in) + H(+)(in). It catalyses the reaction an L-amino acid tripeptide(out) + H(+)(out) = an L-amino acid tripeptide(in) + H(+)(in). Its function is as follows. Peptide transporter that exploits the inwardly directed proton motive force to facilitate the cellular uptake of di/tripeptides. This Candidozyma auris (Yeast) protein is Peptide transporter PTR_A.